Consider the following 273-residue polypeptide: Putative peptidyl-prolyl cis-trans isomerase Cbf2 (273 aa).

The N-terminal stretch at 1 to 21 is a signal peptide; that stretch reads MKKFSLVAATLIAGVVLNVNA. Residues 131 to 228 form the PpiC domain; that stretch reads PARVQAKHIL…FGYHVILKEN (98 aa).

The enzyme catalyses [protein]-peptidylproline (omega=180) = [protein]-peptidylproline (omega=0). This is Putative peptidyl-prolyl cis-trans isomerase Cbf2 (cbf2) from Campylobacter jejuni subsp. jejuni serotype O:2 (strain ATCC 700819 / NCTC 11168).